A 419-amino-acid polypeptide reads, in one-letter code: Large ribosomal subunit protein uL4 (419 aa).

A2 carries the N-acetylalanine modification. Residue K14 is modified to N6-acetyllysine. R97 bears the Omega-N-methylarginine mark. K106 is subject to N6-acetyllysine. Residue K239 forms a Glycyl lysine isopeptide (Lys-Gly) (interchain with G-Cter in SUMO2) linkage. K259 carries the post-translational modification N6-acetyllysine. T266 is subject to Phosphothreonine. Phosphoserine is present on residues S290 and S295. R300 is subject to Citrulline. Residue K327 forms a Glycyl lysine isopeptide (Lys-Gly) (interchain with G-Cter in SUMO2) linkage. K333 and K353 each carry N6-acetyllysine. K364 is modified (N6-acetyllysine; alternate). K364 is covalently cross-linked (Glycyl lysine isopeptide (Lys-Gly) (interchain with G-Cter in SUMO1); alternate). Basic and acidic residues predominate over residues 364–379 (KSEKVVPEKGTADKKP). Residues 364 to 419 (KSEKVVPEKGTADKKPAVGKKGKKVDAKKQKPAGKKVVAKKPAEKKPTTEEKKPAA) form a disordered region. Residue S365 is modified to Phosphoserine. Residues 393–402 (QKPAGKKVVA) show a composition bias toward basic residues. Basic and acidic residues predominate over residues 404–419 (KPAEKKPTTEEKKPAA).

The protein belongs to the universal ribosomal protein uL4 family. Component of the large ribosomal subunit. May bind IPO9 with low affinity. Interacts with RBM3. Citrullinated by PADI4.

Its subcellular location is the cytoplasm. Functionally, component of the large ribosomal subunit. The ribosome is a large ribonucleoprotein complex responsible for the synthesis of proteins in the cell. In Mus musculus (Mouse), this protein is Large ribosomal subunit protein uL4 (Rpl4).